We begin with the raw amino-acid sequence, 273 residues long: Dermonecrotic toxin LhSicTox-alphaIA2bii (273 aa).

H5 is a catalytic residue. Residues E25 and D27 each contribute to the Mg(2+) site. The active-site Nucleophile is the H41. 2 disulfide bridges follow: C45–C51 and C47–C190. D85 provides a ligand contact to Mg(2+).

It belongs to the arthropod phospholipase D family. Class II subfamily. It depends on Mg(2+) as a cofactor. Expressed by the venom gland.

It localises to the secreted. The enzyme catalyses an N-(acyl)-sphingosylphosphocholine = an N-(acyl)-sphingosyl-1,3-cyclic phosphate + choline. It catalyses the reaction an N-(acyl)-sphingosylphosphoethanolamine = an N-(acyl)-sphingosyl-1,3-cyclic phosphate + ethanolamine. It carries out the reaction a 1-acyl-sn-glycero-3-phosphocholine = a 1-acyl-sn-glycero-2,3-cyclic phosphate + choline. The catalysed reaction is a 1-acyl-sn-glycero-3-phosphoethanolamine = a 1-acyl-sn-glycero-2,3-cyclic phosphate + ethanolamine. Dermonecrotic toxins cleave the phosphodiester linkage between the phosphate and headgroup of certain phospholipids (sphingolipid and lysolipid substrates), forming an alcohol (often choline) and a cyclic phosphate. This toxin acts on sphingomyelin (SM). It may also act on ceramide phosphoethanolamine (CPE), lysophosphatidylcholine (LPC) and lysophosphatidylethanolamine (LPE), but not on lysophosphatidylserine (LPS), and lysophosphatidylglycerol (LPG). It acts by transphosphatidylation, releasing exclusively cyclic phosphate products as second products. Induces dermonecrosis, hemolysis, increased vascular permeability, edema, inflammatory response, and platelet aggregation. This is Dermonecrotic toxin LhSicTox-alphaIA2bii from Loxosceles hirsuta (Recluse spider).